A 57-amino-acid polypeptide reads, in one-letter code: Large ribosomal subunit protein bL32c (57 aa).

It belongs to the bacterial ribosomal protein bL32 family.

Its subcellular location is the plastid. The protein resides in the chloroplast. The protein is Large ribosomal subunit protein bL32c of Amborella trichopoda.